Consider the following 308-residue polypeptide: Probable lipid phosphate phosphatase 4 (308 aa).

Helical transmembrane passes span 26–46 (WLILVVLGLIDIVLNVIEPFH), 66–86 (IPMWAVPIICILVPICIFIVY), 93–113 (VYDLHHAILGIGFSCLVTGVT), 162–182 (SFPSGHTSWSFAGLTFLAWYL), 193–213 (GHVAKLCLVFLPILISILIGI), and 226–246 (VFAGAIIGIFVASFSYLHFFP). The interval 274–308 (MTRTGSRGMLGNDVEPGNSASSPHDRHRESTDSDF) is disordered. Positions 296-308 (PHDRHRESTDSDF) are enriched in basic and acidic residues.

This sequence belongs to the PA-phosphatase related phosphoesterase family.

The protein resides in the membrane. This chain is Probable lipid phosphate phosphatase 4 (LPP4), found in Arabidopsis thaliana (Mouse-ear cress).